A 732-amino-acid chain; its full sequence is Catalase-peroxidase (732 aa).

The segment at residues 96-219 is a cross-link (tryptophyl-tyrosyl-methioninium (Trp-Tyr) (with M-245)); sequence WHSAGTYRIG…LGAVQMGLIY (124 aa). The active-site Proton acceptor is the His-97. The tryptophyl-tyrosyl-methioninium (Tyr-Met) (with W-96) cross-link spans 219 to 245; that stretch reads YVNPEGPNGHPDPVASGRDIRETFGRM. His-260 is a binding site for heme b.

Belongs to the peroxidase family. Peroxidase/catalase subfamily. In terms of assembly, homodimer or homotetramer. It depends on heme b as a cofactor. In terms of processing, formation of the three residue Trp-Tyr-Met cross-link is important for the catalase, but not the peroxidase activity of the enzyme.

The enzyme catalyses H2O2 + AH2 = A + 2 H2O. The catalysed reaction is 2 H2O2 = O2 + 2 H2O. Bifunctional enzyme with both catalase and broad-spectrum peroxidase activity. In Acaryochloris marina (strain MBIC 11017), this protein is Catalase-peroxidase.